The following is a 562-amino-acid chain: MRSDEVKKGWHRAPHRSLFRATGLKDEDFEKPFIGVANSFIEIIPGHFFLNKYAEIVKDEIRKNGCVPFEFNTIGVDDGIAMGHDGMLYSLPSREIIANSIETVMNAHKLDALICIPNCDKITPGMVMGALRVNVPSIFVTGGPMRAGHMPDGTPIDLATVFEGVGKFEKGEIDEETLYNLECLACPGGGSCSGMFTANSMNTLIEAMGIALKGNGTVLALTPEREELLRAAARRICEIAKDEQLTEQYRIKNIINEKAIHNAFVVDMAMGGSSNTVLHMMAIAKEADVDFDLHKLNEIARHTSHIAKISPSLQTVHMEDIHRAGGMSAVMKEISRRSDTILYLDNPVIEGGTVADRIKDAEVKDPEVIHPIENPYSKVGGLAILFGNLAEEGCVIKTAGITGERKFRGKAVCFNSQQEAIEGITSGKIKKGDVVVIRYEGPKGGPGMQEMLAPTSLIMGMGLGSDVALITDGRFSGATRGLSIGHVSPEAAEGGMIGLLKDGDIIEIDVDNFSINVDLTPEEIEKRKKEFTPIKKEVPGKWLKQYRMLVTNASNGAVLRAE.

Aspartate 78 serves as a coordination point for Mg(2+). Residue cysteine 119 participates in [2Fe-2S] cluster binding. Mg(2+) is bound by residues aspartate 120 and lysine 121. Lysine 121 bears the N6-carboxylysine mark. Cysteine 192 provides a ligand contact to [2Fe-2S] cluster. Glutamate 450 provides a ligand contact to Mg(2+). The active-site Proton acceptor is serine 476.

This sequence belongs to the IlvD/Edd family. In terms of assembly, homodimer. Requires [2Fe-2S] cluster as cofactor. Mg(2+) is required as a cofactor.

It catalyses the reaction (2R)-2,3-dihydroxy-3-methylbutanoate = 3-methyl-2-oxobutanoate + H2O. The enzyme catalyses (2R,3R)-2,3-dihydroxy-3-methylpentanoate = (S)-3-methyl-2-oxopentanoate + H2O. Its pathway is amino-acid biosynthesis; L-isoleucine biosynthesis; L-isoleucine from 2-oxobutanoate: step 3/4. It functions in the pathway amino-acid biosynthesis; L-valine biosynthesis; L-valine from pyruvate: step 3/4. Functionally, functions in the biosynthesis of branched-chain amino acids. Catalyzes the dehydration of (2R,3R)-2,3-dihydroxy-3-methylpentanoate (2,3-dihydroxy-3-methylvalerate) into 2-oxo-3-methylpentanoate (2-oxo-3-methylvalerate) and of (2R)-2,3-dihydroxy-3-methylbutanoate (2,3-dihydroxyisovalerate) into 2-oxo-3-methylbutanoate (2-oxoisovalerate), the penultimate precursor to L-isoleucine and L-valine, respectively. The protein is Dihydroxy-acid dehydratase of Nautilia profundicola (strain ATCC BAA-1463 / DSM 18972 / AmH).